The chain runs to 379 residues: UDP-4-amino-4-deoxy-L-arabinose--oxoglutarate aminotransferase (379 aa).

N6-(pyridoxal phosphate)lysine is present on Lys182.

It belongs to the DegT/DnrJ/EryC1 family. ArnB subfamily. As to quaternary structure, homodimer. Pyridoxal 5'-phosphate serves as cofactor.

It carries out the reaction UDP-4-amino-4-deoxy-beta-L-arabinose + 2-oxoglutarate = UDP-beta-L-threo-pentopyranos-4-ulose + L-glutamate. It participates in nucleotide-sugar biosynthesis; UDP-4-deoxy-4-formamido-beta-L-arabinose biosynthesis; UDP-4-deoxy-4-formamido-beta-L-arabinose from UDP-alpha-D-glucuronate: step 2/3. It functions in the pathway bacterial outer membrane biogenesis; lipopolysaccharide biosynthesis. Its function is as follows. Catalyzes the conversion of UDP-4-keto-arabinose (UDP-Ara4O) to UDP-4-amino-4-deoxy-L-arabinose (UDP-L-Ara4N). The modified arabinose is attached to lipid A and is required for resistance to polymyxin and cationic antimicrobial peptides. This Escherichia coli O127:H6 (strain E2348/69 / EPEC) protein is UDP-4-amino-4-deoxy-L-arabinose--oxoglutarate aminotransferase.